The primary structure comprises 354 residues: 3'-hydroxy-N-methyl-(S)-coclaurine 4'-O-methyltransferase 1 (354 aa).

Asp223 is an S-adenosyl-L-methionine binding site. His261 serves as the catalytic Proton acceptor.

It belongs to the class I-like SAM-binding methyltransferase superfamily. Cation-independent O-methyltransferase family. COMT subfamily. In terms of tissue distribution, expressed in roots, stems, leaves and flowers. Restricted to sieve elements of the phloem adjacent or proximal to laticifers.

The enzyme catalyses (S)-3'-hydroxy-N-methylcoclaurine + S-adenosyl-L-methionine = (S)-reticuline + S-adenosyl-L-homocysteine + H(+). It functions in the pathway alkaloid biosynthesis; (S)-reticuline biosynthesis; (S)-reticuline from (S)-norcoclaurine: step 4/4. Its function is as follows. Involved in the biosynthesis of benzylisoquinoline alkaloids. Catalyzes the transfer of the methyl group to the 4'-hydroxyl group of 3'-hydroxy-N-methylcoclaurine to form reticuline. Also involved in the papaverine biosynthesis. The polypeptide is 3'-hydroxy-N-methyl-(S)-coclaurine 4'-O-methyltransferase 1 (Papaver somniferum (Opium poppy)).